The primary structure comprises 360 residues: uncharacterized protein (360 aa).

Helical transmembrane passes span 12-32, 52-72, 96-116, 278-298, 306-326, and 336-356; these read ILPL…ITQI, VVLV…VIAV, IQLA…AYYI, IIWP…FLRY, FMPV…HFIL, and FIFA…YLLV.

Its subcellular location is the cell membrane. This is an uncharacterized protein from Rickettsia prowazekii (strain Madrid E).